The following is a 184-amino-acid chain: Peptidyl-tRNA hydrolase (184 aa).

Tyr14 contacts tRNA. The active-site Proton acceptor is His19. TRNA contacts are provided by Phe64, Asn66, and Asn112.

It belongs to the PTH family. Monomer.

The protein resides in the cytoplasm. The catalysed reaction is an N-acyl-L-alpha-aminoacyl-tRNA + H2O = an N-acyl-L-amino acid + a tRNA + H(+). In terms of biological role, hydrolyzes ribosome-free peptidyl-tRNAs (with 1 or more amino acids incorporated), which drop off the ribosome during protein synthesis, or as a result of ribosome stalling. Catalyzes the release of premature peptidyl moieties from peptidyl-tRNA molecules trapped in stalled 50S ribosomal subunits, and thus maintains levels of free tRNAs and 50S ribosomes. The polypeptide is Peptidyl-tRNA hydrolase (Thermoanaerobacter sp. (strain X514)).